Here is a 59-residue protein sequence, read N- to C-terminus: Large ribosomal subunit protein bL32 (59 aa).

A compositionally biased stretch (basic residues) spans 1-15 (MANPKRKQSKRRSAN). The segment at 1 to 48 (MANPKRKQSKRRSANRRAANAFIAPEFAKDPTDGSAFRPHRVNPKNGM) is disordered.

This sequence belongs to the bacterial ribosomal protein bL32 family.

This chain is Large ribosomal subunit protein bL32, found in Opitutus terrae (strain DSM 11246 / JCM 15787 / PB90-1).